We begin with the raw amino-acid sequence, 477 residues long: MSHQSELIAGDILEYLSQHENKDMLRFITCGSVDDGKSTLIGRLLHDSKLIFEDQLAAIERDSKKYNTTDQDIDLALLVDGLQAEREQGITIDVAYRYFSTDKRKFIIADCPGHEQYTRNMATGASTSNLAIILIDARRGVQTQTRRHSYIVSLLGIRHVIVAVNKMDLVDYSEDVYNRIRDEYLTFAEHLDIPDIHFVPISALRGDNVVSRTEAAPWYQGATLMHLLETVQISHDAPLSAFRLPVQYVNRPNLDFRGFCGTIASGAVHPGDAVVALPSGKESRVKEIVTFDGSLSRAGAGQAVTLTLEDEIDISRGDMLVRADEARPHVSRSFDAHLVAMGEAPLRPGKEYGFKLAGKYVTGRIEAILHRTDVNTLQDSPADALALNEIGLCRISLNSPAAFDAYRDCRGSGSLILIDRLSNGTVAAGMIVAQSEEASPAALSPWALFEQELDQLLQRYFPQMTRAELARRLRDEL.

Positions 22–239 (KDMLRFITCG…TVQISHDAPL (218 aa)) constitute a tr-type G domain. The tract at residues 31–38 (GSVDDGKS) is G1. 31–38 (GSVDDGKS) is a GTP binding site. The G2 stretch occupies residues 89–93 (GITID). The G3 stretch occupies residues 110–113 (DCPG). Residues 110–114 (DCPGH) and 165–168 (NKMD) contribute to the GTP site. The segment at 165–168 (NKMD) is G4. The interval 202-204 (SAL) is G5.

The protein belongs to the TRAFAC class translation factor GTPase superfamily. Classic translation factor GTPase family. CysN/NodQ subfamily. In terms of assembly, heterodimer composed of CysD, the smaller subunit, and CysN.

It carries out the reaction sulfate + ATP + H(+) = adenosine 5'-phosphosulfate + diphosphate. It participates in sulfur metabolism; hydrogen sulfide biosynthesis; sulfite from sulfate: step 1/3. Functionally, with CysD forms the ATP sulfurylase (ATPS) that catalyzes the adenylation of sulfate producing adenosine 5'-phosphosulfate (APS) and diphosphate, the first enzymatic step in sulfur assimilation pathway. APS synthesis involves the formation of a high-energy phosphoric-sulfuric acid anhydride bond driven by GTP hydrolysis by CysN coupled to ATP hydrolysis by CysD. This Chromobacterium violaceum (strain ATCC 12472 / DSM 30191 / JCM 1249 / CCUG 213 / NBRC 12614 / NCIMB 9131 / NCTC 9757 / MK) protein is Sulfate adenylyltransferase subunit 1.